Here is a 417-residue protein sequence, read N- to C-terminus: Gamma-glutamyl phosphate reductase (417 aa).

Belongs to the gamma-glutamyl phosphate reductase family.

The protein resides in the cytoplasm. It catalyses the reaction L-glutamate 5-semialdehyde + phosphate + NADP(+) = L-glutamyl 5-phosphate + NADPH + H(+). It functions in the pathway amino-acid biosynthesis; L-proline biosynthesis; L-glutamate 5-semialdehyde from L-glutamate: step 2/2. Its function is as follows. Catalyzes the NADPH-dependent reduction of L-glutamate 5-phosphate into L-glutamate 5-semialdehyde and phosphate. The product spontaneously undergoes cyclization to form 1-pyrroline-5-carboxylate. This chain is Gamma-glutamyl phosphate reductase, found in Legionella pneumophila (strain Corby).